The chain runs to 501 residues: Cytochrome P450 monooxygenase ccsG (501 aa).

The signal sequence occupies residues 1-28 (MMITLFTLAVVSIGFFLWWLLTVQPAVT). Residues Asn-115 and Asn-154 are each glycosylated (N-linked (GlcNAc...) asparagine). Cys-443 provides a ligand contact to heme.

It belongs to the cytochrome P450 family. It depends on heme as a cofactor.

Its pathway is mycotoxin biosynthesis. Functionally, cytochrome P450 monooxygenase; part of the gene cluster that mediates the biosynthesis of a family of the mycotoxins cytochalasins E and K. The hybrid PKS-NRPS synthetase ccsA and the enoyl reductase ccsC are responsible for fusion of phenylalanine with an octaketide backbone and subsequent release of the stable tetramic acid precursor. The polyketide synthase module (PKS) of the PKS-NRPS ccsA is responsible for the synthesis of the octaketide backbone. The downstream nonribosomal peptide synthetase (NRPS) amidates the carboxyl end of the octaketide with a phenylalanine. A reductase-like domain (R) at the C-terminus catalyzes the reductive release of the polyketide-amino acid intermediate. Because ccsA lacks a designated enoylreductase (ER) domain, the required activity is provided the enoyl reductase ccsC. Upon formation of the 11-membered carbocycle-fused perhydroisoindolone intermediate, a number of oxidative steps are required to afford the final cytochalasin E and K, including two hydroxylations at C17 and C18, one alcohol oxidation at C17, one epoxidation at C6 and C7 and two Baeyer-Villiger oxidations. The oxidative modification at C17, C18 and the C6-C7 epoxidation are likely to be catalyzed by the two cytochrome P450 oxygenases ccsD and ccsG. CcsD may be responsible for the epoxidation of the C6-C7 double bond. CcsG may be responsible for the successive oxidative modifications at C17 and C18. The double Baeyer-Villiger oxidations of ketocytochalasin to precytochalasin and cytochalasin Z(16) are among the final steps leading to cytochalasin E and K and are catalyzed by ccsB. The first oxygen insertion step follows that of the classic BVMO mechanism, generating the ester precytochalasin. Release of precytochalasin into an aqueous environment can generate the shunt product iso-precytochalasin through spontaneous isomerization. Alternatively, precytochalasin can undergo further oxidation by ccsB to yield the in-line carbonate-containing cytochalasin Z(16). Cytochalasin Z(16) is a precursor to cytochalasin E and cytochalasin K, whereas iso-precytochalasin is a precursor to cytochalasin Z(17) and rosellichalasin. The hydrolyase ccsE may catalyze hydrolysis of epoxide bond in cytochalasin E to afford cytochalasin K. The function of ccsF has not been assigned but it may play a role in post-PKS-NRPS biosynthetic step, resistance or transport of cytochalasins and related PKS-NRPS products. This Aspergillus clavatus (strain ATCC 1007 / CBS 513.65 / DSM 816 / NCTC 3887 / NRRL 1 / QM 1276 / 107) protein is Cytochrome P450 monooxygenase ccsG.